The following is a 265-amino-acid chain: Putative pyruvate, phosphate dikinase regulatory protein 2 (265 aa).

150–157 (GVSRTSKT) contributes to the ADP binding site.

This sequence belongs to the pyruvate, phosphate/water dikinase regulatory protein family. PDRP subfamily.

The enzyme catalyses N(tele)-phospho-L-histidyl/L-threonyl-[pyruvate, phosphate dikinase] + ADP = N(tele)-phospho-L-histidyl/O-phospho-L-threonyl-[pyruvate, phosphate dikinase] + AMP + H(+). It catalyses the reaction N(tele)-phospho-L-histidyl/O-phospho-L-threonyl-[pyruvate, phosphate dikinase] + phosphate + H(+) = N(tele)-phospho-L-histidyl/L-threonyl-[pyruvate, phosphate dikinase] + diphosphate. Bifunctional serine/threonine kinase and phosphorylase involved in the regulation of the pyruvate, phosphate dikinase (PPDK) by catalyzing its phosphorylation/dephosphorylation. This is Putative pyruvate, phosphate dikinase regulatory protein 2 from Latilactobacillus sakei subsp. sakei (strain 23K) (Lactobacillus sakei subsp. sakei).